Consider the following 227-residue polypeptide: Cytochrome c oxidase subunit 2 (227 aa).

The Mitochondrial intermembrane segment spans residues 1-14; that stretch reads MALPFQLGFQDATS. The chain crosses the membrane as a helical span at residues 15–45; that stretch reads PIMEELLHFHDHTLMIVFMISSLVLYLISSM. The Mitochondrial matrix portion of the chain corresponds to 46 to 59; sequence LTTRLTHTSTMDAQ. A helical membrane pass occupies residues 60-87; it reads EVETIWTILPAIILITIALPSLRILYMM. Residues 88 to 227 lie on the Mitochondrial intermembrane side of the membrane; sequence DEINNPSMTI…CFEKWSTSML (140 aa). Residues His-161, Cys-196, Glu-198, Cys-200, His-204, and Met-207 each contribute to the Cu cation site. Glu-198 lines the Mg(2+) pocket.

It belongs to the cytochrome c oxidase subunit 2 family. As to quaternary structure, component of the cytochrome c oxidase (complex IV, CIV), a multisubunit enzyme composed of 14 subunits. The complex is composed of a catalytic core of 3 subunits MT-CO1, MT-CO2 and MT-CO3, encoded in the mitochondrial DNA, and 11 supernumerary subunits COX4I, COX5A, COX5B, COX6A, COX6B, COX6C, COX7A, COX7B, COX7C, COX8 and NDUFA4, which are encoded in the nuclear genome. The complex exists as a monomer or a dimer and forms supercomplexes (SCs) in the inner mitochondrial membrane with NADH-ubiquinone oxidoreductase (complex I, CI) and ubiquinol-cytochrome c oxidoreductase (cytochrome b-c1 complex, complex III, CIII), resulting in different assemblies (supercomplex SCI(1)III(2)IV(1) and megacomplex MCI(2)III(2)IV(2)). Found in a complex with TMEM177, COA6, COX18, COX20, SCO1 and SCO2. Interacts with TMEM177 in a COX20-dependent manner. Interacts with COX20. Interacts with COX16. It depends on Cu cation as a cofactor.

Its subcellular location is the mitochondrion inner membrane. It catalyses the reaction 4 Fe(II)-[cytochrome c] + O2 + 8 H(+)(in) = 4 Fe(III)-[cytochrome c] + 2 H2O + 4 H(+)(out). Functionally, component of the cytochrome c oxidase, the last enzyme in the mitochondrial electron transport chain which drives oxidative phosphorylation. The respiratory chain contains 3 multisubunit complexes succinate dehydrogenase (complex II, CII), ubiquinol-cytochrome c oxidoreductase (cytochrome b-c1 complex, complex III, CIII) and cytochrome c oxidase (complex IV, CIV), that cooperate to transfer electrons derived from NADH and succinate to molecular oxygen, creating an electrochemical gradient over the inner membrane that drives transmembrane transport and the ATP synthase. Cytochrome c oxidase is the component of the respiratory chain that catalyzes the reduction of oxygen to water. Electrons originating from reduced cytochrome c in the intermembrane space (IMS) are transferred via the dinuclear copper A center (CU(A)) of subunit 2 and heme A of subunit 1 to the active site in subunit 1, a binuclear center (BNC) formed by heme A3 and copper B (CU(B)). The BNC reduces molecular oxygen to 2 water molecules using 4 electrons from cytochrome c in the IMS and 4 protons from the mitochondrial matrix. The chain is Cytochrome c oxidase subunit 2 (MT-CO2) from Phyllostomus hastatus (Greater spear-nosed bat).